The following is a 387-amino-acid chain: 1-deoxy-D-xylulose 5-phosphate reductoisomerase (387 aa).

Residues threonine 10, glycine 11, isoleucine 13, asparagine 38, and asparagine 122 each coordinate NADPH. Residue lysine 123 participates in 1-deoxy-D-xylulose 5-phosphate binding. NADPH is bound at residue glutamate 124. Aspartate 148 is a Mn(2+) binding site. Residues serine 149, glutamate 150, serine 174, and histidine 197 each contribute to the 1-deoxy-D-xylulose 5-phosphate site. Glutamate 150 serves as a coordination point for Mn(2+). Glycine 203 lines the NADPH pocket. The 1-deoxy-D-xylulose 5-phosphate site is built by serine 210, asparagine 215, lysine 216, and glutamate 219. Glutamate 219 lines the Mn(2+) pocket.

This sequence belongs to the DXR family. Mg(2+) is required as a cofactor. It depends on Mn(2+) as a cofactor.

The enzyme catalyses 2-C-methyl-D-erythritol 4-phosphate + NADP(+) = 1-deoxy-D-xylulose 5-phosphate + NADPH + H(+). It participates in isoprenoid biosynthesis; isopentenyl diphosphate biosynthesis via DXP pathway; isopentenyl diphosphate from 1-deoxy-D-xylulose 5-phosphate: step 1/6. Catalyzes the NADPH-dependent rearrangement and reduction of 1-deoxy-D-xylulose-5-phosphate (DXP) to 2-C-methyl-D-erythritol 4-phosphate (MEP). The protein is 1-deoxy-D-xylulose 5-phosphate reductoisomerase of Ehrlichia ruminantium (strain Welgevonden).